We begin with the raw amino-acid sequence, 247 residues long: Ribosomal RNA processing protein 36 homolog (247 aa).

Disordered stretches follow at residues methionine 1–aspartate 29, arginine 62–proline 89, serine 136–valine 188, and glycine 218–glutamine 247. The span at serine 8 to glutamate 23 shows a compositional bias: acidic residues. 2 stretches are compositionally biased toward basic and acidic residues: residues serine 136–leucine 153 and glutamate 164–arginine 174. Over residues glycine 218–proline 240 the composition is skewed to basic residues.

It belongs to the RRP36 family.

Its subcellular location is the nucleus. The protein localises to the nucleolus. Functionally, involved in the early processing steps of the pre-rRNA in the maturation pathway leading to the 18S rRNA. This chain is Ribosomal RNA processing protein 36 homolog, found in Nematostella vectensis (Starlet sea anemone).